We begin with the raw amino-acid sequence, 351 residues long: Spermidine/putrescine import ATP-binding protein PotA (351 aa).

The region spanning 6–236 is the ABC transporter domain; sequence LELRNVTKEY…PENAWVANFI (231 aa). Residue 38–45 participates in ATP binding; that stretch reads GPSGCGKT.

Belongs to the ABC transporter superfamily. Spermidine/putrescine importer (TC 3.A.1.11.1) family. As to quaternary structure, the complex is composed of two ATP-binding proteins (PotA), two transmembrane proteins (PotB and PotC) and a solute-binding protein (PotD).

The protein localises to the cell membrane. It carries out the reaction ATP + H2O + polyamine-[polyamine-binding protein]Side 1 = ADP + phosphate + polyamineSide 2 + [polyamine-binding protein]Side 1.. Its function is as follows. Part of the ABC transporter complex PotABCD involved in spermidine/putrescine import. Responsible for energy coupling to the transport system. This is Spermidine/putrescine import ATP-binding protein PotA from Mycoplasma mycoides subsp. mycoides SC (strain CCUG 32753 / NCTC 10114 / PG1).